We begin with the raw amino-acid sequence, 331 residues long: XylDLEGF operon transcriptional activator 1 (331 aa).

Residues 214 to 315 (ERVVQFIEEN…GELPSDTLRR (102 aa)) form the HTH araC/xylS-type domain. DNA-binding regions (H-T-H motif) lie at residues 231 to 252 (ERLA…EKHA) and 282 to 305 (VTEM…RSTF).

It is found in the cytoplasm. Functionally, regulatory protein of the TOL plasmid xyl operons. XylS activates the xylXYZLTEGFJQKIH operon required for the degradation of toluene, m-xylene and p-xylene. This Pseudomonas putida (Arthrobacter siderocapsulatus) protein is XylDLEGF operon transcriptional activator 1 (xylS1).